The sequence spans 284 residues: Pantothenate synthetase (284 aa).

30 to 37 (MGNLHDGH) provides a ligand contact to ATP. H37 acts as the Proton donor in catalysis. Q61 is a binding site for (R)-pantoate. Q61 is a beta-alanine binding site. 149–152 (GEKD) serves as a coordination point for ATP. Residue Q155 participates in (R)-pantoate binding. ATP-binding positions include V178 and 186–189 (LSSR).

It belongs to the pantothenate synthetase family. Homodimer.

Its subcellular location is the cytoplasm. It catalyses the reaction (R)-pantoate + beta-alanine + ATP = (R)-pantothenate + AMP + diphosphate + H(+). The protein operates within cofactor biosynthesis; (R)-pantothenate biosynthesis; (R)-pantothenate from (R)-pantoate and beta-alanine: step 1/1. Its function is as follows. Catalyzes the condensation of pantoate with beta-alanine in an ATP-dependent reaction via a pantoyl-adenylate intermediate. This Erwinia tasmaniensis (strain DSM 17950 / CFBP 7177 / CIP 109463 / NCPPB 4357 / Et1/99) protein is Pantothenate synthetase.